A 158-amino-acid polypeptide reads, in one-letter code: Transcriptional repressor NrdR (158 aa).

Residues 1–22 form a disordered region; the sequence is MRCPYCGSEDTQVKDSRPAEDN. A zinc finger lies at 3–34; sequence CPYCGSEDTQVKDSRPAEDNTSIRRRRICPDC. Over residues 11–22 the composition is skewed to basic and acidic residues; that stretch reads TQVKDSRPAEDN. The ATP-cone domain occupies 49–139; sequence LMVIKKTGRK…VYRDFSLAED (91 aa).

It belongs to the NrdR family. It depends on Zn(2+) as a cofactor.

Functionally, negatively regulates transcription of bacterial ribonucleotide reductase nrd genes and operons by binding to NrdR-boxes. In Rhizobium etli (strain CIAT 652), this protein is Transcriptional repressor NrdR.